We begin with the raw amino-acid sequence, 377 residues long: Histone deacetylase 8 (377 aa).

The interval 5–336 (RVDVFWHEGM…LHAMLEGVLK (332 aa)) is histone deacetylase. The active-site Proton donor/acceptor is His145. Asp182, His184, and Asp274 together coordinate Zn(2+).

It belongs to the histone deacetylase family. Zn(2+) is required as a cofactor. As to expression, expressed in stems, leaves, flowers, siliques and mature seeds.

Its subcellular location is the nucleus. It is found in the cytoplasm. The catalysed reaction is N(6)-acetyl-L-lysyl-[histone] + H2O = L-lysyl-[histone] + acetate. In terms of biological role, responsible for the deacetylation of lysine residues on the N-terminal part of the core histones (H2A, H2B, H3 and H4). Histone deacetylation gives a tag for epigenetic repression and plays an important role in transcriptional regulation, cell cycle progression and developmental events. Histone deacetylases act via the formation of large multiprotein complexes. This chain is Histone deacetylase 8, found in Arabidopsis thaliana (Mouse-ear cress).